Here is a 380-residue protein sequence, read N- to C-terminus: Queuine tRNA-ribosyltransferase (380 aa).

Asp93 functions as the Proton acceptor in the catalytic mechanism. Residues 93–97 (DSGGF), Asp147, Gln198, and Gly225 contribute to the substrate site. An RNA binding region spans residues 256–262 (GVGLPSN). Residue Asp275 is the Nucleophile of the active site. An RNA binding; important for wobble base 34 recognition region spans residues 280-284 (ARNGR). Residues Cys313, Cys315, Cys318, and His344 each coordinate Zn(2+).

It belongs to the queuine tRNA-ribosyltransferase family. In terms of assembly, homodimer. Within each dimer, one monomer is responsible for RNA recognition and catalysis, while the other monomer binds to the replacement base PreQ1. Zn(2+) serves as cofactor.

The catalysed reaction is 7-aminomethyl-7-carbaguanine + guanosine(34) in tRNA = 7-aminomethyl-7-carbaguanosine(34) in tRNA + guanine. Its pathway is tRNA modification; tRNA-queuosine biosynthesis. Catalyzes the base-exchange of a guanine (G) residue with the queuine precursor 7-aminomethyl-7-deazaguanine (PreQ1) at position 34 (anticodon wobble position) in tRNAs with GU(N) anticodons (tRNA-Asp, -Asn, -His and -Tyr). Catalysis occurs through a double-displacement mechanism. The nucleophile active site attacks the C1' of nucleotide 34 to detach the guanine base from the RNA, forming a covalent enzyme-RNA intermediate. The proton acceptor active site deprotonates the incoming PreQ1, allowing a nucleophilic attack on the C1' of the ribose to form the product. After dissociation, two additional enzymatic reactions on the tRNA convert PreQ1 to queuine (Q), resulting in the hypermodified nucleoside queuosine (7-(((4,5-cis-dihydroxy-2-cyclopenten-1-yl)amino)methyl)-7-deazaguanosine). This chain is Queuine tRNA-ribosyltransferase, found in Clostridium perfringens (strain ATCC 13124 / DSM 756 / JCM 1290 / NCIMB 6125 / NCTC 8237 / Type A).